Consider the following 675-residue polypeptide: UvrABC system protein B (675 aa).

Residues 32-417 (EGLSDGLAYQ…EHAGQVVEQV (386 aa)) enclose the Helicase ATP-binding domain. 45-52 (GVTGSGKT) contacts ATP. Positions 98 to 121 (YYDYYQPEAYVPSRDLFIEKDSAI) match the Beta-hairpin motif. Positions 436 to 602 (QVDDLMSEIN…QIKKQVKDII (167 aa)) constitute a Helicase C-terminal domain. Residues 634 to 669 (IKEIAKLEKAMQQAARDLQFEEAAVLRDRISNIKEN) enclose the UVR domain.

The protein belongs to the UvrB family. As to quaternary structure, forms a heterotetramer with UvrA during the search for lesions. Interacts with UvrC in an incision complex.

Its subcellular location is the cytoplasm. The UvrABC repair system catalyzes the recognition and processing of DNA lesions. A damage recognition complex composed of 2 UvrA and 2 UvrB subunits scans DNA for abnormalities. Upon binding of the UvrA(2)B(2) complex to a putative damaged site, the DNA wraps around one UvrB monomer. DNA wrap is dependent on ATP binding by UvrB and probably causes local melting of the DNA helix, facilitating insertion of UvrB beta-hairpin between the DNA strands. Then UvrB probes one DNA strand for the presence of a lesion. If a lesion is found the UvrA subunits dissociate and the UvrB-DNA preincision complex is formed. This complex is subsequently bound by UvrC and the second UvrB is released. If no lesion is found, the DNA wraps around the other UvrB subunit that will check the other stand for damage. This Neisseria gonorrhoeae (strain ATCC 700825 / FA 1090) protein is UvrABC system protein B.